The primary structure comprises 4568 residues: Dynein beta chain, flagellar outer arm (4568 aa).

The stem stretch occupies residues 1–1880; that stretch reads MAEDEGMTAA…QVNICDAEIA (1880 aa). Coiled coils occupy residues 277–293, 1158–1175, 1372–1400, 1614–1650, and 1778–1825; these read FQRLFREVEAAQQEAND, EEAAAKKAAEEEEKRKAL, KIDVDFLVEETKKLSKDIKMLNKAVRNYD, EACTLDGRQERLENMQSMLEQCEKALQEYLETKRVAF, and QEIN…RKKL. The interval 1144 to 1166 is disordered; the sequence is GVEEEPEYHPDQDPEEAAAKKAA. Basic and acidic residues predominate over residues 1150-1166; sequence EYHPDQDPEEAAAKKAA. AAA regions lie at residues 1881-2102, 2164-2385, 2493-2738, and 2841-3090; these read YSYE…TLYV, EAAH…RNFK, QYIP…ITQG, and EYNE…FRRY. ATP is bound by residues 1919-1926, 2202-2209, and 2530-2537; these read GPAGTGKT, GAAGCGKT, and GNTGTGKS. Positions 2831 to 2848 form a coiled coil; that stretch reads LRKTLEDKLREYNESNAV. An ATP-binding site is contributed by 2879–2886; it reads GVGGSGKQ. 3 coiled-coil regions span residues 3106–3162, 3339–3425, and 3648–3728; these read KMLL…DELI, KRAA…RLES, and HERP…KARE. Residues 3106-3425 form a stalk region; it reads KMLLQLKRDD…WGAEIKRLES (320 aa). AAA regions lie at residues 3481 to 3711 and 3937 to 4172; these read LTDD…EIEE and MGRF…TANN.

This sequence belongs to the dynein heavy chain family. As to quaternary structure, consists of at least 3 heavy chains (alpha, beta and gamma), 2 intermediate chains and 8 light chains.

It is found in the cell projection. It localises to the cilium. The protein localises to the flagellum. The protein resides in the cytoplasm. Its subcellular location is the cytoskeleton. It is found in the flagellum axoneme. In terms of biological role, force generating protein of eukaryotic cilia and flagella. Produces force towards the minus ends of microtubules. Dynein has ATPase activity; the force-producing power stroke is thought to occur on release of ADP. In Chlamydomonas reinhardtii (Chlamydomonas smithii), this protein is Dynein beta chain, flagellar outer arm (ODA4).